The sequence spans 330 residues: Aspartate--ammonia ligase (330 aa).

The protein belongs to the class-II aminoacyl-tRNA synthetase family. AsnA subfamily.

The protein localises to the cytoplasm. It carries out the reaction L-aspartate + NH4(+) + ATP = L-asparagine + AMP + diphosphate + H(+). It functions in the pathway amino-acid biosynthesis; L-asparagine biosynthesis; L-asparagine from L-aspartate (ammonia route): step 1/1. This chain is Aspartate--ammonia ligase, found in Streptococcus thermophilus (strain CNRZ 1066).